We begin with the raw amino-acid sequence, 414 residues long: Dual-specificity RNA methyltransferase RlmN (414 aa).

Residues 1–20 (MMSTPETATEATAPEAAPAP) show a composition bias toward low complexity. Positions 1-24 (MMSTPETATEATAPEAAPAPSLGA) are disordered. The active-site Proton acceptor is the glutamate 129. Residues 135–385 (ESDRGTLCVS…VRTPRGRDIL (251 aa)) form the Radical SAM core domain. Residues cysteine 142 and cysteine 388 are joined by a disulfide bond. Cysteine 149, cysteine 153, and cysteine 156 together coordinate [4Fe-4S] cluster. S-adenosyl-L-methionine contacts are provided by residues 214–215 (GE), serine 246, 268–270 (SLH), and asparagine 345. Cysteine 388 acts as the S-methylcysteine intermediate in catalysis.

This sequence belongs to the radical SAM superfamily. RlmN family. [4Fe-4S] cluster is required as a cofactor.

It localises to the cytoplasm. The catalysed reaction is adenosine(2503) in 23S rRNA + 2 reduced [2Fe-2S]-[ferredoxin] + 2 S-adenosyl-L-methionine = 2-methyladenosine(2503) in 23S rRNA + 5'-deoxyadenosine + L-methionine + 2 oxidized [2Fe-2S]-[ferredoxin] + S-adenosyl-L-homocysteine. The enzyme catalyses adenosine(37) in tRNA + 2 reduced [2Fe-2S]-[ferredoxin] + 2 S-adenosyl-L-methionine = 2-methyladenosine(37) in tRNA + 5'-deoxyadenosine + L-methionine + 2 oxidized [2Fe-2S]-[ferredoxin] + S-adenosyl-L-homocysteine. Functionally, specifically methylates position 2 of adenine 2503 in 23S rRNA and position 2 of adenine 37 in tRNAs. m2A2503 modification seems to play a crucial role in the proofreading step occurring at the peptidyl transferase center and thus would serve to optimize ribosomal fidelity. This is Dual-specificity RNA methyltransferase RlmN from Xanthobacter autotrophicus (strain ATCC BAA-1158 / Py2).